Here is a 198-residue protein sequence, read N- to C-terminus: Riboflavin synthase (198 aa).

2 Lumazine-binding repeats span residues 1–95 (MFSG…IGGH) and 96–188 (FVSG…VDTV). 2,4-dihydroxypteridine contacts are provided by residues 4 to 6 (GII), 46 to 48 (CLT), 60 to 65 (DVTEET), 99 to 101 (GHV), Lys-130, 139 to 141 (SLT), and 153 to 158 (SVIPET).

Homotrimer.

The catalysed reaction is 2 6,7-dimethyl-8-(1-D-ribityl)lumazine + H(+) = 5-amino-6-(D-ribitylamino)uracil + riboflavin. The protein operates within cofactor biosynthesis; riboflavin biosynthesis; riboflavin from 2-hydroxy-3-oxobutyl phosphate and 5-amino-6-(D-ribitylamino)uracil: step 2/2. Functionally, catalyzes the dismutation of two molecules of 6,7-dimethyl-8-ribityllumazine, resulting in the formation of riboflavin and 5-amino-6-(D-ribitylamino)uracil. The polypeptide is Riboflavin synthase (ribE) (Chlamydia muridarum (strain MoPn / Nigg)).